Consider the following 229-residue polypeptide: Adenylate kinase (229 aa).

The propeptide occupies 1–9 (MLSTLAKRF). Residue 25-30 (GVGKGT) participates in ATP binding. Positions 45-74 (STGDALRAEIRGQTPLGKRVKGIIESGGLV) are NMP. Residues Thr46, Arg51, 72–74 (GLV), 100–103 (GIPR), and Gln107 contribute to the AMP site. Residues 141–178 (GRLFHPGSGRVYHKVTNPPKKPMTDDITGEPLIIRKDD) are LID. Arg142 serves as a coordination point for ATP. AMP contacts are provided by Arg175 and Arg186. Gly214 lines the ATP pocket.

This sequence belongs to the adenylate kinase family.

It is found in the hydrogenosome. The catalysed reaction is AMP + ATP = 2 ADP. Its function is as follows. Catalyzes the reversible transfer of the terminal phosphate group between ATP and AMP. Plays an important role in cellular energy homeostasis and in adenine nucleotide metabolism. The protein is Adenylate kinase of Trichomonas vaginalis.